The primary structure comprises 68 residues: Small ribosomal subunit protein bS21 (68 aa).

Basic and acidic residues predominate over residues 37–49 (EKPSEKRAREKAA). The disordered stretch occupies residues 37–68 (EKPSEKRAREKAAAVRRARKMERKRMERDGIK). Basic residues predominate over residues 50-59 (AVRRARKMER).

This sequence belongs to the bacterial ribosomal protein bS21 family.

The sequence is that of Small ribosomal subunit protein bS21 from Erythrobacter litoralis (strain HTCC2594).